Reading from the N-terminus, the 626-residue chain is Fructose-1,6-bisphosphatase class 3 (626 aa).

This sequence belongs to the FBPase class 3 family. The cofactor is Mn(2+).

It catalyses the reaction beta-D-fructose 1,6-bisphosphate + H2O = beta-D-fructose 6-phosphate + phosphate. It participates in carbohydrate biosynthesis; gluconeogenesis. In Enterococcus faecalis (strain ATCC 700802 / V583), this protein is Fructose-1,6-bisphosphatase class 3.